The primary structure comprises 656 residues: Chaperone protein DnaK (656 aa).

Disordered stretches follow at residues 488-532 (EMQE…DAVD) and 579-656 (YQQQ…DEDE). Residues 492-513 (EAEKHAEEDEKRRERIEARNEA) show a composition bias toward basic and acidic residues. The segment covering 523-532 (LLDENEDAVD) has biased composition (acidic residues). Gly residues predominate over residues 584-635 (GEGGAGAGAGAAGGMGGAGPGGMGGAGPGGMGGAGPGGMGGAGPGAGAGQQG). Acidic residues predominate over residues 636–656 (DGEEFVDADFEDVDDEDDEDE).

This sequence belongs to the heat shock protein 70 family.

In terms of biological role, acts as a chaperone. The polypeptide is Chaperone protein DnaK (Natronomonas pharaonis (strain ATCC 35678 / DSM 2160 / CIP 103997 / JCM 8858 / NBRC 14720 / NCIMB 2260 / Gabara) (Halobacterium pharaonis)).